A 520-amino-acid polypeptide reads, in one-letter code: Mitogen-activated protein kinase kinase 3 (520 aa).

S69 carries the post-translational modification Phosphoserine. Residues 83 to 339 enclose the Protein kinase domain; that stretch reads MRVFGAIGSG…ADQLLSHPFI (257 aa). Residues 89–97 and K112 contribute to the ATP site; that span reads IGSGASSVV. The active-site Proton acceptor is the D207. A Phosphoserine modification is found at S235. Phosphothreonine is present on residues T241 and T245. The region spanning 366-516 is the NTF2 domain; sequence LADMLTIHYY…YFLAKQELYI (151 aa).

Belongs to the protein kinase superfamily. STE Ser/Thr protein kinase family. MAP kinase kinase subfamily. As to quaternary structure, interacts with MPK1, MPK2 and MPK7. Interacts with P.syringae type III effector HopF2. Interacts with MPK14. Binds to MAPKKK17 and MAPKKK18. Binds to MAPKKK20. Phosphorylation at Ser-235 and Thr-241 by MAP kinase kinase kinases positively regulates kinase activity. Phosphorylated by MAPKKK20. In terms of tissue distribution, mostly expressed in leaves, and, to a lower extent, in roots, seedlings, flower buds, flowers and siliques.

It localises to the nucleus. The protein localises to the cytoplasm. It carries out the reaction L-seryl-[protein] + ATP = O-phospho-L-seryl-[protein] + ADP + H(+). The enzyme catalyses L-threonyl-[protein] + ATP = O-phospho-L-threonyl-[protein] + ADP + H(+). The catalysed reaction is L-tyrosyl-[protein] + ATP = O-phospho-L-tyrosyl-[protein] + ADP + H(+). In terms of biological role, MKK3-MPK6 module plays an important role in the jasmonate signal transduction pathway through the negative regulation of MYC2/JIN1 expression. Activates by phosphorylation the downstream MPK6, MPK7 and MPK8. MKK3-MPK7 module acts as a positive regulator of PR1 gene expression. MKK3-MPK8 module negatively regulates ROS accumulation through controlling expression of the RBOHD gene. Component of the abscisic acid (ABA) signaling pathway that may act as ABA signal transducer in the context of abiotic stresses. Activator of the C group MAP kinases. Activates MPK7 in response to ABA. Mitogen-activated protein kinase (MAPK) that is specifically regulated by MAPKKK20 and mediates signaling that regulates cortical microtubule functions. This chain is Mitogen-activated protein kinase kinase 3, found in Arabidopsis thaliana (Mouse-ear cress).